Here is a 193-residue protein sequence, read N- to C-terminus: Cysteine and glycine-rich protein 1 (193 aa).

Positions 10–61 constitute an LIM zinc-binding 1 domain; it reads CGVCQKTVYFAEEVQCEGNSFHKSCFLCMVCKKNLDSTTVAVHGEEIYCKSC. Positions 64–69 match the Nuclear localization signal motif; it reads KKYGPK. Position 81 is a phosphoserine (Ser-81). The residue at position 84 (Lys-84) is an N6-acetyllysine. A Glycyl lysine isopeptide (Lys-Gly) (interchain with G-Cter in SUMO2) cross-link involves residue Lys-91. 4 positions are modified to N6-acetyllysine: Lys-112, Lys-131, Lys-137, and Lys-161. Residues 119 to 170 form the LIM zinc-binding 2 domain; it reads CPRCSQAVYAAEKVIGAGKSWHKSCFRCAKCGKGLESTTLADKDGEIYCKGC. Ser-192 is modified (phosphoserine).

In terms of assembly, interacts with ASCC1; ASCC2 and TRIP4.

The protein resides in the nucleus. Functionally, could play a role in neuronal development. This is Cysteine and glycine-rich protein 1 (Csrp1) from Mus musculus (Mouse).